The sequence spans 212 residues: Ropporin-1A (212 aa).

In terms of domain architecture, RIIa spans Pro12 to Thr49. The residue at position 56 (Ser56) is a Phosphoserine. An interaction with RHPN1 region spans residues Val209–Glu212.

This sequence belongs to the ropporin family. As to quaternary structure, homodimer. Interacts with AKAP3 and RHPN1. May interact with SPA17. Interacts with FSCB; the interaction increases upon spermatozoa capacitation conditions. Interacts with CFAP61. Post-translationally, sumoylated, sumoylation decreases upon spermatozoa capacitation conditions. Testis specific in adult. Overexpressed in hematologic tumor cells.

It is found in the cell projection. Its subcellular location is the cilium. The protein localises to the flagellum. In terms of biological role, important for male fertility. With ROPN1L, involved in fibrous sheath integrity and sperm motility, plays a role in PKA-dependent signaling processes required for spermatozoa capacitation. This chain is Ropporin-1A (ROPN1), found in Homo sapiens (Human).